Reading from the N-terminus, the 467-residue chain is Cysteine--tRNA ligase (467 aa).

Residue cysteine 28 coordinates Zn(2+). Positions 30–40 match the 'HIGH' region motif; that stretch reads PTVYNYIHVGN. Cysteine 212, histidine 237, and glutamate 241 together coordinate Zn(2+). Residues 269 to 273 carry the 'KMSKS' region motif; it reads KMSKS. Lysine 272 contacts ATP.

The protein belongs to the class-I aminoacyl-tRNA synthetase family. As to quaternary structure, monomer. Zn(2+) serves as cofactor.

It localises to the cytoplasm. The catalysed reaction is tRNA(Cys) + L-cysteine + ATP = L-cysteinyl-tRNA(Cys) + AMP + diphosphate. In Oenococcus oeni (strain ATCC BAA-331 / PSU-1), this protein is Cysteine--tRNA ligase.